The primary structure comprises 187 residues: dTTP/UTP pyrophosphatase (187 aa).

Residue aspartate 64 is the Proton acceptor of the active site.

This sequence belongs to the Maf family. YhdE subfamily. A divalent metal cation is required as a cofactor.

It localises to the cytoplasm. It catalyses the reaction dTTP + H2O = dTMP + diphosphate + H(+). The enzyme catalyses UTP + H2O = UMP + diphosphate + H(+). In terms of biological role, nucleoside triphosphate pyrophosphatase that hydrolyzes dTTP and UTP. May have a dual role in cell division arrest and in preventing the incorporation of modified nucleotides into cellular nucleic acids. This chain is dTTP/UTP pyrophosphatase, found in Leptospira interrogans serogroup Icterohaemorrhagiae serovar Lai (strain 56601).